Consider the following 418-residue polypeptide: Probable carboxypeptidase AFLA_000940 (418 aa).

Positions 1–18 (MKATDLFHVTVLVAGALA) are cleaved as a signal peptide. An N-linked (GlcNAc...) asparagine glycan is attached at N74. D147 provides a ligand contact to Zn(2+). N-linked (GlcNAc...) asparagine glycosylation occurs at N168. E179 (proton acceptor) is an active-site residue. Position 180 (E180) interacts with Zn(2+).

The protein belongs to the peptidase M20A family. Zn(2+) serves as cofactor.

The protein resides in the secreted. The chain is Probable carboxypeptidase AFLA_000940 from Aspergillus flavus (strain ATCC 200026 / FGSC A1120 / IAM 13836 / NRRL 3357 / JCM 12722 / SRRC 167).